The chain runs to 106 residues: Oncosphere antigen B (106 aa).

The region spanning 11–106 (LPQHFRWSQV…QSELRSMCIK (96 aa)) is the Fibronectin type-III domain.

This Hydatigena taeniaeformis (Feline tapeworm) protein is Oncosphere antigen B (ONCB).